Reading from the N-terminus, the 176-residue chain is ATP synthase subunit b, chloroplastic (176 aa).

A helical transmembrane segment spans residues 19 to 39; that stretch reads LDLLETNIINIFILIIILIYL.

Belongs to the ATPase B chain family. F-type ATPases have 2 components, F(1) - the catalytic core - and F(0) - the membrane proton channel. F(1) has five subunits: alpha(3), beta(3), gamma(1), delta(1), epsilon(1). F(0) has four main subunits: a(1), b(1), b'(1) and c(10-14). The alpha and beta chains form an alternating ring which encloses part of the gamma chain. F(1) is attached to F(0) by a central stalk formed by the gamma and epsilon chains, while a peripheral stalk is formed by the delta, b and b' chains.

It localises to the plastid. The protein resides in the chloroplast thylakoid membrane. Its function is as follows. F(1)F(0) ATP synthase produces ATP from ADP in the presence of a proton or sodium gradient. F-type ATPases consist of two structural domains, F(1) containing the extramembraneous catalytic core and F(0) containing the membrane proton channel, linked together by a central stalk and a peripheral stalk. During catalysis, ATP synthesis in the catalytic domain of F(1) is coupled via a rotary mechanism of the central stalk subunits to proton translocation. Functionally, component of the F(0) channel, it forms part of the peripheral stalk, linking F(1) to F(0). The protein is ATP synthase subunit b, chloroplastic of Galdieria sulphuraria (Red alga).